The chain runs to 205 residues: Small ribosomal subunit protein uS4 (205 aa).

Residues 1 to 16 (MSKRETTKYKIDRRMG) show a composition bias toward basic and acidic residues. The disordered stretch occupies residues 1-46 (MSKRETTKYKIDRRMGENIWGRPKSPVNRRDYGPGQHGQRRKGKLS). The 64-residue stretch at 94-157 (SRLDAVIYRA…KQLVLVLESV (64 aa)) folds into the S4 RNA-binding domain.

Belongs to the universal ribosomal protein uS4 family. In terms of assembly, part of the 30S ribosomal subunit. Contacts protein S5. The interaction surface between S4 and S5 is involved in control of translational fidelity.

Its function is as follows. One of the primary rRNA binding proteins, it binds directly to 16S rRNA where it nucleates assembly of the body of the 30S subunit. In terms of biological role, with S5 and S12 plays an important role in translational accuracy. This chain is Small ribosomal subunit protein uS4, found in Bartonella quintana (strain Toulouse) (Rochalimaea quintana).